The chain runs to 348 residues: Fe-S cluster assembly protein DRE2 (348 aa).

The interval 1-158 is N-terminal SAM-like domain; that stretch reads MSQYKTGLLL…LPTFKKASSS (158 aa). Residues 137-170 are disordered; the sequence is KTNNTKLQSGSKLPTFKKASSSTSNLPSFKKADH. Residues 144–163 show a composition bias toward polar residues; sequence QSGSKLPTFKKASSSTSNLP. The interval 159 to 242 is linker; the sequence is TSNLPSFKKA…EEELIDEDGS (84 aa). Serine 206 is subject to Phosphoserine. [2Fe-2S] cluster-binding residues include cysteine 252, cysteine 263, cysteine 266, and cysteine 268. The fe-S binding site A stretch occupies residues 252-268; the sequence is CGKSKTKKKKACKDCTC. Cysteine 311, cysteine 314, cysteine 322, and cysteine 325 together coordinate [4Fe-4S] cluster. 2 short sequence motifs (cx2C motif) span residues 311-314 and 322-325; these read CGSC and CSGC. Residues 311-325 form a fe-S binding site B region; it reads CGSCSLGDAFRCSGC.

It belongs to the anamorsin family. Monomer. Interacts with TAH18. Interacts with MIA40. The cofactor is [2Fe-2S] cluster. [4Fe-4S] cluster serves as cofactor. In terms of processing, ubiquitinated.

It is found in the cytoplasm. The protein localises to the mitochondrion intermembrane space. In terms of biological role, component of the cytosolic iron-sulfur (Fe-S) protein assembly (CIA) machinery required for the maturation of extramitochondrial Fe-S proteins. Part of an electron transfer chain functioning in an early step of cytosolic Fe-S biogenesis, facilitating the de novo assembly of a [4Fe-4S] cluster on the scaffold complex CFD1-NBP35. Electrons are transferred to DRE2 from NADPH via the FAD- and FMN-containing protein TAH18. TAH18-DRE2 are also required for the assembly of the diferric tyrosyl radical cofactor of ribonucleotide reductase (RNR), probably by providing electrons for reduction during radical cofactor maturation in the catalytic small subunit RNR2. Has anti-apoptotic effects in the cell. Involved in negative control of H(2)O(2)-induced cell death. In Saccharomyces cerevisiae (strain ATCC 204508 / S288c) (Baker's yeast), this protein is Fe-S cluster assembly protein DRE2.